The primary structure comprises 1136 residues: Myosin-binding protein C, fast-type (1136 aa).

Disordered stretches follow at residues 1-55 (MPEA…KKPD) and 151-177 (APRQDSSGQSLESFKRSGDGKSEDAGE). A compositionally biased stretch (basic and acidic residues) spans 13–35 (KGKDAPKEAPAKQTPEEPPKEAP). In terms of domain architecture, Ig-like C2-type 1 spans 46 to 149 (PTGIFLKKPD…CDSCSFNVDV (104 aa)). Positions 163 to 174 (SFKRSGDGKSED) are enriched in basic and acidic residues. 4 Ig-like C2-type domains span residues 250–339 (SAAF…VKEP), 340–432 (PVLI…VEEK), 433–533 (QLEV…KQEP), and 534–633 (PKIH…VVDV). Fibronectin type-III domains follow at residues 636–732 (PPEA…IAPT) and 734–829 (APQH…IREI). The 95-residue stretch at 833-927 (PKIRLPRHLR…ATIRIRVVEK (95 aa)) folds into the Ig-like C2-type 6 domain. The region spanning 930–1025 (PAENVMVKEV…SKNTARILKT (96 aa)) is the Fibronectin type-III 3 domain. One can recognise an Ig-like C2-type 7 domain in the interval 1043 to 1136 (PKFLTPLMDR…ECKLDVRVPQ (94 aa)).

It belongs to the immunoglobulin superfamily. MyBP family.

Thick filament-associated protein located in the crossbridge region of vertebrate striated muscle a bands. In vitro it binds MHC, F-actin and native thin filaments, and modifies the activity of actin-activated myosin ATPase. It may modulate muscle contraction or may play a more structural role. This chain is Myosin-binding protein C, fast-type (Mybpc2), found in Mus musculus (Mouse).